A 300-amino-acid chain; its full sequence is Glutamyl-Q tRNA(Asp) synthetase (300 aa).

L-glutamate contacts are provided by residues 8–12 (RFAPS) and Glu-44. Residues 11-21 (PSPTGALHAGS) carry the 'HIGH' region motif. Cys-100, Cys-102, Tyr-126, and Cys-130 together coordinate Zn(2+). The L-glutamate site is built by Tyr-190 and Arg-208. The short motif at 246–250 (KLSKQ) is the 'KMSKS' region element. An ATP-binding site is contributed by Lys-249.

Belongs to the class-I aminoacyl-tRNA synthetase family. GluQ subfamily. It depends on Zn(2+) as a cofactor.

Its function is as follows. Catalyzes the tRNA-independent activation of glutamate in presence of ATP and the subsequent transfer of glutamate onto a tRNA(Asp). Glutamate is transferred on the 2-amino-5-(4,5-dihydroxy-2-cyclopenten-1-yl) moiety of the queuosine in the wobble position of the QUC anticodon. The protein is Glutamyl-Q tRNA(Asp) synthetase of Leptothrix cholodnii (strain ATCC 51168 / LMG 8142 / SP-6) (Leptothrix discophora (strain SP-6)).